A 302-amino-acid polypeptide reads, in one-letter code: Heme A synthase (302 aa).

Topologically, residues 1–8 (MFRKQNLK) are cytoplasmic. A helical transmembrane segment spans residues 9–29 (WLGVLATIIMTFVQLGGALVT). Over 30 to 67 (KTGSEDGCGSSWPLCNGALLPENLPIQTIIELSHRAVS) the chain is Extracellular. C37 and C44 are joined by a disulfide. Residue E60 is part of the active site. Residue H63 participates in heme o binding. Residues 68–88 (AISLIVVLWLVITAWKNIGYI) form a helical membrane-spanning segment. Topologically, residues 89–93 (KEIKP) are cytoplasmic. The helical transmembrane segment at 94 to 114 (LSIISVGFLLVQALVGAAAVI) threads the bilayer. Residues 115–125 (WQQNPYVLALH) lie on the Extracellular side of the membrane. H125 lines the heme o pocket. Residues 126–146 (FGISLISFSSVFLMTLIIFSI) form a helical membrane-spanning segment. Topologically, residues 147-161 (DKKYEADILFIHKPL) are cytoplasmic. Residues 162–182 (RILTWLMAIIVYLTIYTGALV) form a helical membrane-spanning segment. Residues 183–215 (RHTKSSLAYGAWPIPFDDIVPHNAHDWVQFSHR) are Extracellular-facing. H214 contacts heme b. The chain crosses the membrane as a helical span at residues 216-236 (GMALITFIWIMITFIHAIKNY). The Cytoplasmic segment spans residues 237–244 (SDNRTVRY). Residues 245–265 (GYTASFILVILQVITGALSVI) form a helical membrane-spanning segment. The Extracellular portion of the chain corresponds to 266–270 (TNVNL). Residues 271–291 (IIALFHALFITYLFGMIAYFI) form a helical membrane-spanning segment. H276 serves as a coordination point for heme b. Residues 292-302 (LLMLRTTRSQK) are Cytoplasmic-facing.

It belongs to the COX15/CtaA family. Type 1 subfamily. In terms of assembly, interacts with CtaB. Heme b serves as cofactor.

Its subcellular location is the cell membrane. The catalysed reaction is Fe(II)-heme o + 2 A + H2O = Fe(II)-heme a + 2 AH2. It functions in the pathway porphyrin-containing compound metabolism; heme A biosynthesis; heme A from heme O: step 1/1. Its function is as follows. Catalyzes the conversion of heme O to heme A by two successive hydroxylations of the methyl group at C8. The first hydroxylation forms heme I, the second hydroxylation results in an unstable dihydroxymethyl group, which spontaneously dehydrates, resulting in the formyl group of heme A. This is Heme A synthase from Staphylococcus epidermidis (strain ATCC 35984 / DSM 28319 / BCRC 17069 / CCUG 31568 / BM 3577 / RP62A).